A 393-amino-acid polypeptide reads, in one-letter code: S-adenosylmethionine decarboxylase proenzyme (393 aa).

Active-site residues include glutamate 11 and glutamate 14. Residue serine 71 is the Schiff-base intermediate with substrate; via pyruvic acid of the active site. Pyruvic acid (Ser); by autocatalysis is present on serine 71. The active-site Proton donor; for catalytic activity is cysteine 85. Residues serine 236 and histidine 249 each act as proton acceptor; for processing activity in the active site.

Belongs to the eukaryotic AdoMetDC family. Requires pyruvate as cofactor. In terms of processing, is synthesized initially as an inactive proenzyme. Formation of the active enzyme involves a self-maturation process in which the active site pyruvoyl group is generated from an internal serine residue via an autocatalytic post-translational modification. Two non-identical subunits are generated from the proenzyme in this reaction, and the pyruvate is formed at the N-terminus of the alpha chain, which is derived from the carboxyl end of the proenzyme. The post-translation cleavage follows an unusual pathway, termed non-hydrolytic serinolysis, in which the side chain hydroxyl group of the serine supplies its oxygen atom to form the C-terminus of the beta chain, while the remainder of the serine residue undergoes an oxidative deamination to produce ammonia and the pyruvoyl group blocking the N-terminus of the alpha chain.

It catalyses the reaction S-adenosyl-L-methionine + H(+) = S-adenosyl 3-(methylsulfanyl)propylamine + CO2. It participates in amine and polyamine biosynthesis; S-adenosylmethioninamine biosynthesis; S-adenosylmethioninamine from S-adenosyl-L-methionine: step 1/1. In Hordeum chilense (Barley), this protein is S-adenosylmethionine decarboxylase proenzyme (SAMDC).